Consider the following 63-residue polypeptide: Large ribosomal subunit protein bL28 (63 aa).

Positions 1 to 20 are disordered; sequence MSRRCAITGKGPMVGNNVSH.

Belongs to the bacterial ribosomal protein bL28 family.

This Campylobacter curvus (strain 525.92) protein is Large ribosomal subunit protein bL28.